The following is a 215-amino-acid chain: 3-demethoxyubiquinol 3-hydroxylase (215 aa).

Residues Glu64, Glu94, His97, Glu146, Glu178, and His181 each contribute to the Fe cation site.

Belongs to the COQ7 family. Fe cation serves as cofactor.

The protein localises to the cell membrane. The enzyme catalyses a 5-methoxy-2-methyl-3-(all-trans-polyprenyl)benzene-1,4-diol + AH2 + O2 = a 3-demethylubiquinol + A + H2O. It participates in cofactor biosynthesis; ubiquinone biosynthesis. In terms of biological role, catalyzes the hydroxylation of 2-nonaprenyl-3-methyl-6-methoxy-1,4-benzoquinol during ubiquinone biosynthesis. This chain is 3-demethoxyubiquinol 3-hydroxylase, found in Pseudomonas putida (strain W619).